Consider the following 352-residue polypeptide: tRNA pseudouridine synthase D (352 aa).

D81 acts as the Nucleophile in catalysis. The TRUD domain maps to 157–303 (GIPNYFGAQR…MSHERRILRL (147 aa)).

It belongs to the pseudouridine synthase TruD family.

The catalysed reaction is uridine(13) in tRNA = pseudouridine(13) in tRNA. Functionally, responsible for synthesis of pseudouridine from uracil-13 in transfer RNAs. In Pseudomonas fluorescens (strain Pf0-1), this protein is tRNA pseudouridine synthase D.